The chain runs to 406 residues: Acetylornithine aminotransferase (406 aa).

Residues 108–109 (GA) and phenylalanine 141 each bind pyridoxal 5'-phosphate. Arginine 144 contributes to the N(2)-acetyl-L-ornithine binding site. Residue 226–229 (DEVQ) coordinates pyridoxal 5'-phosphate. An N6-(pyridoxal phosphate)lysine modification is found at lysine 255. Threonine 283 provides a ligand contact to N(2)-acetyl-L-ornithine. Threonine 284 lines the pyridoxal 5'-phosphate pocket.

It belongs to the class-III pyridoxal-phosphate-dependent aminotransferase family. ArgD subfamily. Homodimer. The cofactor is pyridoxal 5'-phosphate.

Its subcellular location is the cytoplasm. It catalyses the reaction N(2)-acetyl-L-ornithine + 2-oxoglutarate = N-acetyl-L-glutamate 5-semialdehyde + L-glutamate. Its pathway is amino-acid biosynthesis; L-arginine biosynthesis; N(2)-acetyl-L-ornithine from L-glutamate: step 4/4. The chain is Acetylornithine aminotransferase from Pseudomonas putida (strain ATCC 47054 / DSM 6125 / CFBP 8728 / NCIMB 11950 / KT2440).